A 489-amino-acid polypeptide reads, in one-letter code: UDP-N-acetylmuramoylalanine--D-glutamate ligase (489 aa).

ATP is bound at residue 126–132 (GTNGKTT).

The protein belongs to the MurCDEF family.

The protein resides in the cytoplasm. It catalyses the reaction UDP-N-acetyl-alpha-D-muramoyl-L-alanine + D-glutamate + ATP = UDP-N-acetyl-alpha-D-muramoyl-L-alanyl-D-glutamate + ADP + phosphate + H(+). The protein operates within cell wall biogenesis; peptidoglycan biosynthesis. In terms of biological role, cell wall formation. Catalyzes the addition of glutamate to the nucleotide precursor UDP-N-acetylmuramoyl-L-alanine (UMA). This is UDP-N-acetylmuramoylalanine--D-glutamate ligase from Mycolicibacterium paratuberculosis (strain ATCC BAA-968 / K-10) (Mycobacterium paratuberculosis).